Here is a 353-residue protein sequence, read N- to C-terminus: Photosystem II protein D1 (353 aa).

T2 carries the post-translational modification N-acetylthreonine. Residue T2 is modified to Phosphothreonine. 3 consecutive transmembrane segments (helical) span residues 29–46 (YIGWFGVLMIPTLLTATS), 118–133 (HFLLGVRCYMGREWEL), and 142–156 (WIAVAYSAPVAAATA). Residue H118 participates in chlorophyll a binding. Residue Y126 participates in pheophytin a binding. D170 and E189 together coordinate [CaMn4O5] cluster. A helical transmembrane segment spans residues 197-218 (FHMLGVAGVFGGSLFSAMHGSL). A chlorophyll a-binding site is contributed by H198. Residues H215 and 264 to 265 (SF) each bind a quinone. A Fe cation-binding site is contributed by H215. H272 lines the Fe cation pocket. A helical membrane pass occupies residues 274–288 (FLAAWPVIGIWFTSL). H332, E333, D342, and A344 together coordinate [CaMn4O5] cluster. Positions 345–353 (AVEAPSTIG) are excised as a propeptide.

It belongs to the reaction center PufL/M/PsbA/D family. PSII is composed of 1 copy each of membrane proteins PsbA, PsbB, PsbC, PsbD, PsbE, PsbF, PsbH, PsbI, PsbJ, PsbK, PsbL, PsbM, PsbT, PsbX, PsbY, PsbZ, Psb30/Ycf12, at least 3 peripheral proteins of the oxygen-evolving complex and a large number of cofactors. It forms dimeric complexes. The D1/D2 heterodimer binds P680, chlorophylls that are the primary electron donor of PSII, and subsequent electron acceptors. It shares a non-heme iron and each subunit binds pheophytin, quinone, additional chlorophylls, carotenoids and lipids. D1 provides most of the ligands for the Mn4-Ca-O5 cluster of the oxygen-evolving complex (OEC). There is also a Cl(-1) ion associated with D1 and D2, which is required for oxygen evolution. The PSII complex binds additional chlorophylls, carotenoids and specific lipids. serves as cofactor. Tyr-161 forms a radical intermediate that is referred to as redox-active TyrZ, YZ or Y-Z. Post-translationally, C-terminally processed by CTPA; processing is essential to allow assembly of the oxygen-evolving complex and thus photosynthetic growth.

It localises to the plastid. Its subcellular location is the chloroplast thylakoid membrane. It catalyses the reaction 2 a plastoquinone + 4 hnu + 2 H2O = 2 a plastoquinol + O2. Photosystem II (PSII) is a light-driven water:plastoquinone oxidoreductase that uses light energy to abstract electrons from H(2)O, generating O(2) and a proton gradient subsequently used for ATP formation. It consists of a core antenna complex that captures photons, and an electron transfer chain that converts photonic excitation into a charge separation. The D1/D2 (PsbA/PsbD) reaction center heterodimer binds P680, the primary electron donor of PSII as well as several subsequent electron acceptors. This chain is Photosystem II protein D1, found in Landoltia punctata (Dotted duckmeat).